The chain runs to 110 residues: Phosphoribosyl-ATP pyrophosphatase (110 aa).

The protein belongs to the PRA-PH family.

It is found in the cytoplasm. The enzyme catalyses 1-(5-phospho-beta-D-ribosyl)-ATP + H2O = 1-(5-phospho-beta-D-ribosyl)-5'-AMP + diphosphate + H(+). The protein operates within amino-acid biosynthesis; L-histidine biosynthesis; L-histidine from 5-phospho-alpha-D-ribose 1-diphosphate: step 2/9. This chain is Phosphoribosyl-ATP pyrophosphatase (hisE), found in Clostridium acetobutylicum (strain ATCC 824 / DSM 792 / JCM 1419 / IAM 19013 / LMG 5710 / NBRC 13948 / NRRL B-527 / VKM B-1787 / 2291 / W).